The sequence spans 308 residues: MIDILLLGCGGGMPMPNRFLSATLINYRGRKILVDCGEGTQVSMRISNTGFKSIDIICITHIHGDHIVGLPGLLGTIGNSGRTEPITIIGPEGIRETVEKLRVIANWLPYEINIIENPKDTFKLFDGNINLDVDISVLELDHSSPCIGYCFYFKRQPKFDVEKAEKNKVPKILWNRLQRNEENIVLDGALYTNDMVTGEERKGIKVSIITDTRPIKNIIEFINDSDYFICEGTYGEDKDLPKAIKNKHMTFREAADLALKGNVKKLLLTHFGTAMNEPEEYLNNANEVFDKTIIGFDRYKTTLNFNED.

Histidine 61, histidine 63, aspartate 65, histidine 66, histidine 142, aspartate 211, and histidine 270 together coordinate Zn(2+). The active-site Proton acceptor is aspartate 65.

It belongs to the RNase Z family. As to quaternary structure, homodimer. Zn(2+) serves as cofactor.

It catalyses the reaction Endonucleolytic cleavage of RNA, removing extra 3' nucleotides from tRNA precursor, generating 3' termini of tRNAs. A 3'-hydroxy group is left at the tRNA terminus and a 5'-phosphoryl group is left at the trailer molecule.. Zinc phosphodiesterase, which displays some tRNA 3'-processing endonuclease activity. Probably involved in tRNA maturation, by removing a 3'-trailer from precursor tRNA. This chain is Ribonuclease Z, found in Clostridium beijerinckii (strain ATCC 51743 / NCIMB 8052) (Clostridium acetobutylicum).